The chain runs to 156 residues: Transcriptional repressor NrdR (156 aa).

A zinc finger lies at 3–34 (CPKCNSTHSRVVDSRHADEANAIRRRRECENC). The 91-residue stretch at 49–139 (LIVVKKDGTR…VYKEFKDVDQ (91 aa)) folds into the ATP-cone domain.

It belongs to the NrdR family. It depends on Zn(2+) as a cofactor.

Negatively regulates transcription of bacterial ribonucleotide reductase nrd genes and operons by binding to NrdR-boxes. The chain is Transcriptional repressor NrdR from Staphylococcus epidermidis (strain ATCC 35984 / DSM 28319 / BCRC 17069 / CCUG 31568 / BM 3577 / RP62A).